The sequence spans 106 residues: uncharacterized protein (106 aa).

Helical transmembrane passes span 4–24 (LPVV…IGFL), 27–47 (MLLR…LFII), and 78–98 (VLIL…INML).

Its subcellular location is the cell membrane. This is an uncharacterized protein from Bacillus subtilis (strain 168).